We begin with the raw amino-acid sequence, 196 residues long: ATP synthase subunit b (196 aa).

Residues proline 24–tryptophan 44 form a helical membrane-spanning segment.

The protein belongs to the ATPase B chain family. As to quaternary structure, F-type ATPases have 2 components, F(1) - the catalytic core - and F(0) - the membrane proton channel. F(1) has five subunits: alpha(3), beta(3), gamma(1), delta(1), epsilon(1). F(0) has three main subunits: a(1), b(2) and c(10-14). The alpha and beta chains form an alternating ring which encloses part of the gamma chain. F(1) is attached to F(0) by a central stalk formed by the gamma and epsilon chains, while a peripheral stalk is formed by the delta and b chains.

Its subcellular location is the cell membrane. F(1)F(0) ATP synthase produces ATP from ADP in the presence of a proton or sodium gradient. F-type ATPases consist of two structural domains, F(1) containing the extramembraneous catalytic core and F(0) containing the membrane proton channel, linked together by a central stalk and a peripheral stalk. During catalysis, ATP synthesis in the catalytic domain of F(1) is coupled via a rotary mechanism of the central stalk subunits to proton translocation. Functionally, component of the F(0) channel, it forms part of the peripheral stalk, linking F(1) to F(0). This chain is ATP synthase subunit b, found in Frankia casuarinae (strain DSM 45818 / CECT 9043 / HFP020203 / CcI3).